The following is a 413-amino-acid chain: MPLLVCGINHQSAPLTVREKLVFTPERTPLALQSLLAEKAVNEALLLSTCNRTEIYTTVDEAATILRWLSKQPQLSGIDLRSFCYARRDIEMVRHVMRVGSGLDSMVLGEPQILGQMKQAYLLARRIGAVGSELGRLFPAVFAATKRIRSETAIGANPVSIAYAVVQLAKRIFSHLNQCQILLIGAGETIELVFSHLYNQGARHFFIANRTLTRAKQIAEPYHAQAIRLSDIPTYLPKVDIVISATMSQLPLVGKGAVESALRQRKRRPLFMADLALPRDIEPETAQLEDVYLYNIDDLQTLIAQNRQTREAAAKQAEAMVEMQAIHYMRQLQVHKAGDTIRRFRERVEMLRDQELEKALAHFQRTNDPKAVIAHFAHNLTNKILHQPTTKLRQAAYEDQVQLLLSAKELFDL.

Substrate is bound by residues 49–52 (TCNR), Ser105, 110–112 (EPQ), and Gln116. The active-site Nucleophile is the Cys50. Residue 185 to 190 (GAGETI) coordinates NADP(+).

Belongs to the glutamyl-tRNA reductase family. As to quaternary structure, homodimer.

It carries out the reaction (S)-4-amino-5-oxopentanoate + tRNA(Glu) + NADP(+) = L-glutamyl-tRNA(Glu) + NADPH + H(+). It functions in the pathway porphyrin-containing compound metabolism; protoporphyrin-IX biosynthesis; 5-aminolevulinate from L-glutamyl-tRNA(Glu): step 1/2. In terms of biological role, catalyzes the NADPH-dependent reduction of glutamyl-tRNA(Glu) to glutamate 1-semialdehyde (GSA). This Coxiella burnetii (strain Dugway 5J108-111) protein is Glutamyl-tRNA reductase.